Here is a 229-residue protein sequence, read N- to C-terminus: Uracil-DNA glycosylase (229 aa).

Asp64 acts as the Proton acceptor in catalysis.

This sequence belongs to the uracil-DNA glycosylase (UDG) superfamily. UNG family. In terms of assembly, monomer.

It localises to the cytoplasm. It catalyses the reaction Hydrolyzes single-stranded DNA or mismatched double-stranded DNA and polynucleotides, releasing free uracil.. Excises uracil residues from the DNA which can arise as a result of misincorporation of dUMP residues by DNA polymerase or due to deamination of cytosine. The polypeptide is Uracil-DNA glycosylase (Escherichia coli O157:H7).